The sequence spans 305 residues: Hepatitis A virus cellular receptor 1 homolog (305 aa).

An N-terminal signal peptide occupies residues 1-21; it reads MNQIQVFISGLILLLPGAVDS. The 101-residue stretch at 22–122 folds into the Ig-like V-type domain; the sequence is YVEVKGVVGH…PGWFNDQKVT (101 aa). The Extracellular portion of the chain corresponds to 22 to 237; sequence YVEVKGVVGH…GKPQKNPTKG (216 aa). Intrachain disulfides connect Cys37/Cys108, Cys49/Cys60, and Cys55/Cys107. A disordered region spans residues 129–185; sequence PEIPTRPPTRPTTTRPTATGRPTTISTRSTHVPTSIRVSTSTPPTSTHTWTHKPEPT. Low complexity-rich tracts occupy residues 139-152 and 161-177; these read PTTTRPTATGRPTT and PTSIRVSTSTPPTSTHT. N-linked (GlcNAc...) asparagine glycosylation is present at Asn208. The chain crosses the membrane as a helical span at residues 238 to 258; sequence FYVGICIAALLLLLLVSTVAI. The Cytoplasmic segment spans residues 259–305; the sequence is TRYILMKRKSASLSVVAFRVSKIEALQNAAVVHSRAEDNIYIVEDRP.

The protein belongs to the immunoglobulin superfamily. TIM family. Interacts with STAM. Interacts with SELPLG. In terms of tissue distribution, expressed by stimulated T-cells. Expressed during primary antigen stimulation. Expressed at higher levels on B rather than T-cells, both constitutively and after activation.

The protein resides in the cell membrane. In terms of biological role, phosphatidylserine receptor that plays an important functional role in regulatory B-cells homeostasis including generation, expansion and suppressor functions. As P-selectin/SELPLG ligand, plays a specialized role in activated but not naive T-cell trafficking during inflammatory responses. Controls thereby T-cell accumulation in the inflamed central nervous system (CNS) and the induction of autoimmune disease. Also regulates expression of various anti-inflammatory cytokines and co-inhibitory ligands including IL10. Acts as a regulator of T-cell proliferation. May play a role in kidney injury and repair. This is Hepatitis A virus cellular receptor 1 homolog (Havcr1) from Mus musculus (Mouse).